The sequence spans 581 residues: Arginine--tRNA ligase (581 aa).

Residues 122-132 carry the 'HIGH' region motif; the sequence is PNVAKPMHVGH.

The protein belongs to the class-I aminoacyl-tRNA synthetase family. Monomer.

It localises to the cytoplasm. The enzyme catalyses tRNA(Arg) + L-arginine + ATP = L-arginyl-tRNA(Arg) + AMP + diphosphate. The protein is Arginine--tRNA ligase of Francisella tularensis subsp. novicida (strain U112).